The chain runs to 98 residues: NADH-ubiquinone oxidoreductase chain 4L (98 aa).

3 helical membrane-spanning segments follow: residues 1 to 21, 28 to 48, and 59 to 79; these read MMSI…GVLI, STLL…ALLI, and APLV…ALLV.

The protein belongs to the complex I subunit 4L family. In terms of assembly, core subunit of respiratory chain NADH dehydrogenase (Complex I) which is composed of 45 different subunits.

It localises to the mitochondrion inner membrane. The catalysed reaction is a ubiquinone + NADH + 5 H(+)(in) = a ubiquinol + NAD(+) + 4 H(+)(out). Its function is as follows. Core subunit of the mitochondrial membrane respiratory chain NADH dehydrogenase (Complex I) which catalyzes electron transfer from NADH through the respiratory chain, using ubiquinone as an electron acceptor. Part of the enzyme membrane arm which is embedded in the lipid bilayer and involved in proton translocation. This Pseudocheirus peregrinus (Common ring-tailed possum) protein is NADH-ubiquinone oxidoreductase chain 4L (MT-ND4L).